The primary structure comprises 417 residues: Serine hydroxymethyltransferase (417 aa).

Residues Leu-116 and 120 to 122 contribute to the (6S)-5,6,7,8-tetrahydrofolate site; that span reads GHL. Lys-225 is modified (N6-(pyridoxal phosphate)lysine).

It belongs to the SHMT family. Homodimer. The cofactor is pyridoxal 5'-phosphate.

The protein resides in the cytoplasm. The enzyme catalyses (6R)-5,10-methylene-5,6,7,8-tetrahydrofolate + glycine + H2O = (6S)-5,6,7,8-tetrahydrofolate + L-serine. Its pathway is one-carbon metabolism; tetrahydrofolate interconversion. It participates in amino-acid biosynthesis; glycine biosynthesis; glycine from L-serine: step 1/1. Catalyzes the reversible interconversion of serine and glycine with tetrahydrofolate (THF) serving as the one-carbon carrier. This reaction serves as the major source of one-carbon groups required for the biosynthesis of purines, thymidylate, methionine, and other important biomolecules. Also exhibits THF-independent aldolase activity toward beta-hydroxyamino acids, producing glycine and aldehydes, via a retro-aldol mechanism. The chain is Serine hydroxymethyltransferase from Hydrogenobaculum sp. (strain Y04AAS1).